The following is a 1371-amino-acid chain: MNCQRYFCFVNGIVEIRTAPEEYQNKPVLVGSQSDGLLIIDNHADIEDGIFSTLHIGNGYNGAVDVINGAALHMDNRSGSAPLIVGAFGNDIAGKLNISGRNSIVSYRDTPSSSGHNESIYVGFGPGATGWINIFNGGVFEVLNSTNIYVGSDTPGGGDGSIVIDGSNSKMTADFSEAYVGLYGNGDISLKNGGQLSASNLYIGGNGRAIVNISGTDSRLIANMITISGSSGAPGIYIADQGILNVDNYINITTANDTKGKLFINSDMPGTIESKGILFGVGKAELIFKHNSDNYAFSSPLISKNTGNGIINAESGETHLTGDNTDYSGLLNILPTASIDISSQKNIGKSVIVNNGVLQITSQDDWTFNNNMTGNGYLNVHTGGHNFAFQNSTNTQEFTGTLALSDTLFDLSDDNTTALTSALVLAGVGSVITAGTGTQVINGFSFDGGAVNFGAVTQGAQQTESQIQVTDNLYINGNGAVRVSTPTDVNGIPQVINSSLSLLEQDDSNATIKLVDASSAVVKGNGGNLQLQDASGQVISSGKQRNIVQQGKNVAKGVYDYRLTSGPHNDGLYIGYALTQLDLLASGVDALVLDAAGTTGNAADMSARITGAGDLAFNSQKGETVSLSNQDNDYTGVTAIRGGNVLMNSNSVLGQTSEIRLATDTRLDMNGHSQTVGKLNGAAGSVLNINGGNLTLTDDGVSAGTLTGGGFLNISGGVLDITGGNHTFAVSTIIAKDATVRMNDVSGLGTGNISNAGTLSLTHASGLLSNNLSGSGTVSLINSDTQISGNNSNYSGLFVVDTSSQLTATGAQNLGIASVSNRGILQLNNTTDWQLINNVTGTGNVRKTGSGSLTVRSNAAWSGQTDIDDGSLILGQSDAPVMLASSLVNIAKNGKLTGFGGVVGNVTNSGSLDLRSAAPGNILTIGGNYTGNNGTLLINTVLDDSSSATDKLVIKGDASGKTRVAVTNVGGSGANTLNSIEVIHVDGNAANAEFIQAGRIAAGAYDYTLGRGPGSNYGNWYLSSSKNTPEPRPDPEPTPEGHDNNLRPEASSYTANIAAANTMFVTRLHERLGQTQYVDAITGEPKATSMWMRHEGGHNRWRDGSGQLKTQSNRYVIQLGGDIAQWDWGGTNRWHLGVMAGYGNNHSSTGAVRTGYHSKGSVNGYSTGLYATWYADDETHNGAYLDTWAQYGWFDNHVKGDGLPGESWKSKGLTASLETGYAWKIGEFSSNYGNLNEWYVQPQAQLVWMGVKADELYESNGTLIESTGDGNVHTRLGVKTWIKRLNKMDDGKSREFSPFVEVNWLHNTRDFGVRMNGEPVYQDGTRNIGEVKTGVEGQINPHLNLWGNVRVQVGDKGYNDTSAMLGVKYTF.

The interval 1020 to 1048 (WYLSSSKNTPEPRPDPEPTPEGHDNNLRP) is disordered. The span at 1029-1046 (PEPRPDPEPTPEGHDNNL) shows a compositional bias: basic and acidic residues. The Autotransporter domain maps to 1083–1371 (GEPKATSMWM…SAMLGVKYTF (289 aa)).

Its subcellular location is the cell outer membrane. This is an uncharacterized protein from Escherichia coli (strain K12).